Here is a 561-residue protein sequence, read N- to C-terminus: MRSDTIKKGFDKAPHRSLLRATGLRDEDFDKPFIGIANSYIDIIPGHFFLHEYGEIVKAAIREAGGVPFVFNTIGVDDGIAMGHDGMLYSLPSREIIADSIETVMNAHKLDALICIPNCDKIVPGMIMGALRVNVPTVFVSGGPMAAGHKKDGTPIDLATAFEAVGEHAEGKITDEELYDIECNACPSGGSCSGMFTANSMNTLCEAMGIALPGNGTVLAMTPRRIEMVKAAAKRIVEMAKADDSKYNLKNVLNEKAVHNAFVVDMAMGGSSNTVLHMLAIAREAGVDFPIEKINEIADNVAHIAKISPSLTTVHMDDIDKAGGVNAVMKEISRRGGLLYLENPTVTGETLGERIADAKILNEEIIHRNENAYSQVGGLSILFGNLATEGAVVKTAGIELNMRQFKGTAICFNSQPEAITGIMKHKVKPGNVVVIRYEGPKGGPGMQEMLAPTALIQGMGLGDSVALITDGRFSGATKGASIGHVSPEAAEGGLIAFIEDGDEIELDTDKHLLRLNVSDDVIAARKANYKPYKNEVKSKWLKRYQLLVSNASNGAVLKTEL.

Asp78 is a binding site for Mg(2+). Cys119 contacts [2Fe-2S] cluster. Residues Asp120 and Lys121 each contribute to the Mg(2+) site. Lys121 is subject to N6-carboxylysine. Residue Cys192 coordinates [2Fe-2S] cluster. Glu448 serves as a coordination point for Mg(2+). Ser474 (proton acceptor) is an active-site residue.

This sequence belongs to the IlvD/Edd family. Homodimer. [2Fe-2S] cluster is required as a cofactor. Requires Mg(2+) as cofactor.

It carries out the reaction (2R)-2,3-dihydroxy-3-methylbutanoate = 3-methyl-2-oxobutanoate + H2O. It catalyses the reaction (2R,3R)-2,3-dihydroxy-3-methylpentanoate = (S)-3-methyl-2-oxopentanoate + H2O. The protein operates within amino-acid biosynthesis; L-isoleucine biosynthesis; L-isoleucine from 2-oxobutanoate: step 3/4. Its pathway is amino-acid biosynthesis; L-valine biosynthesis; L-valine from pyruvate: step 3/4. In terms of biological role, functions in the biosynthesis of branched-chain amino acids. Catalyzes the dehydration of (2R,3R)-2,3-dihydroxy-3-methylpentanoate (2,3-dihydroxy-3-methylvalerate) into 2-oxo-3-methylpentanoate (2-oxo-3-methylvalerate) and of (2R)-2,3-dihydroxy-3-methylbutanoate (2,3-dihydroxyisovalerate) into 2-oxo-3-methylbutanoate (2-oxoisovalerate), the penultimate precursor to L-isoleucine and L-valine, respectively. The chain is Dihydroxy-acid dehydratase from Sulfurimonas denitrificans (strain ATCC 33889 / DSM 1251) (Thiomicrospira denitrificans (strain ATCC 33889 / DSM 1251)).